Reading from the N-terminus, the 96-residue chain is Maintenance of carboxysome distribution protein B (96 aa).

The span at 1-18 (MTNLEDKLSASIKTENKD) shows a compositional bias: basic and acidic residues. The disordered stretch occupies residues 1–96 (MTNLEDKLSA…STHPRRVWPD (96 aa)). The segment covering 59–74 (ARATTTKPAVSKSSKP) has biased composition (low complexity).

Monomer, associates with McdA:DNA. Interacts with shell components of the carboxysome.

The protein localises to the carboxysome. Its function is as follows. McdA and McdB together mediate carboxysome positioning on the nucleoid and to prevent their aggregation in the cell. Undergoes liquid-liquid phase separation at pH 7.0 in the presence of crowders polyethylene glycol or Ficoll. McdA is an ATPase that forms dynamic gradients on the nucleoid in response to adapter protein McdB, which associates with carboxysomes. The interplay between McdA gradients on the nucleoid and McdB-bound carboxysomes result in the equal spacing of Cbs along the cell length. Stimulates the ATPase activity of McdA, causing McdA to be released from DNA. Functionally, incorrect positioning (aggregation) of carboxysomes results in reduced CO(2) fixation by encapsulated form 1 ribulose-1,5-bisphosphate carboxylase (RuBisCO, cbbL/cbbS), which leads to slower growth. The protein is Maintenance of carboxysome distribution protein B of Halothiobacillus neapolitanus (strain ATCC 23641 / c2) (Thiobacillus neapolitanus).